The chain runs to 494 residues: Alpha-amylase 1 (494 aa).

Residues M1 to A18 form the signal peptide. Residues C46 and C102 are joined by a disulfide bond. N116, R165, and D174 together coordinate Ca(2+). An intrachain disulfide couples C153 to C167. R202 contacts chloride. D204 functions as the Nucleophile in the catalytic mechanism. Position 208 (H208) interacts with Ca(2+). Residue E241 is the Proton donor of the active site. Residues N304 and R343 each contribute to the chloride site. Residues F350–F370 are disordered. Over residues T351–Q363 the composition is skewed to low complexity. 2 disulfide bridges follow: C376–C382 and C448–C460.

The protein belongs to the glycosyl hydrolase 13 family. In terms of assembly, monomer. Ca(2+) is required as a cofactor. Requires chloride as cofactor.

The enzyme catalyses Endohydrolysis of (1-&gt;4)-alpha-D-glucosidic linkages in polysaccharides containing three or more (1-&gt;4)-alpha-linked D-glucose units.. This chain is Alpha-amylase 1 (Amy35), found in Drosophila ananassae (Fruit fly).